The following is a 454-amino-acid chain: Transmembrane protease serine 3 (454 aa).

Residues 1-48 (MGENDPPAVEAPFSFRSLFGLDDLKISPVAPDADAVAAQILSLLPLKF) are Cytoplasmic-facing. The helical; Signal-anchor for type II membrane protein transmembrane segment at 49–69 (FPIIVIGIIALILALAIGLGI) threads the bilayer. Over 70 to 454 (HFDCSGKYRC…HEQMERDLKT (385 aa)) the chain is Extracellular. One can recognise an LDL-receptor class A domain in the interval 72–108 (DCSGKYRCRSSFKCIELIARCDGVSDCKDGEDEYRCV). 10 disulfide bridges follow: cysteine 73–cysteine 85, cysteine 79–cysteine 98, cysteine 92–cysteine 107, cysteine 129–cysteine 194, cysteine 142–cysteine 204, cysteine 207–cysteine 324, cysteine 242–cysteine 258, cysteine 338–cysteine 407, cysteine 370–cysteine 386, and cysteine 397–cysteine 425. Residues 109-205 (RVGGQNAVLQ…SGHVVTLQCT (97 aa)) form the SRCR domain. Residues 217–449 (IVGGNMSLLS…FLDWIHEQME (233 aa)) enclose the Peptidase S1 domain. Residue asparagine 221 is glycosylated (N-linked (GlcNAc...) asparagine). Catalysis depends on charge relay system residues histidine 257 and aspartate 304. The active-site Charge relay system is serine 401.

It belongs to the peptidase S1 family. Undergoes autoproteolytic activation. In terms of tissue distribution, expressed in many tissues including fetal cochlea. Isoform T is found at increased levels in some carcinomas.

The protein localises to the endoplasmic reticulum membrane. Probable serine protease that plays a role in hearing. Acts as a permissive factor for cochlear hair cell survival and activation at the onset of hearing and is required for saccular hair cell survival. Activates ENaC (in vitro). This is Transmembrane protease serine 3 (TMPRSS3) from Homo sapiens (Human).